Consider the following 440-residue polypeptide: 5-hydroxytryptamine receptor 6 (440 aa).

Residues 1–27 (MVPEPGPSANSTPAWGAGPPSAPGGSG) lie on the Extracellular side of the membrane. A helical membrane pass occupies residues 28 to 52 (WVAAALCVVIALTAAANSLLIALIC). At 53 to 62 (TQPALRNTSN) the chain is on the cytoplasmic side. A helical membrane pass occupies residues 63–88 (FFLVSLFTSDLMVGLVVMPPAMLNAL). Residues 89–96 (YGRWVLAR) lie on the Extracellular side of the membrane. A helical membrane pass occupies residues 97–122 (GLCLLWTAFDVMCCSASILNLCLISL). C99 and C180 are oxidised to a cystine. D106 lines the serotonin pocket. Residues 123-142 (DRYLLILSPLRYKLRMTPPR) lie on the Cytoplasmic side of the membrane. Residues 143 to 167 (ALALVLGAWSLAALASFLPLLLGWH) form a helical membrane-spanning segment. Residues 168 to 185 (ELGHARPPVPGQCRLLAS) lie on the Extracellular side of the membrane. The chain crosses the membrane as a helical span at residues 186–209 (LPFVLVASGLTFFLPSGAICFTYC). The Cytoplasmic segment spans residues 210–266 (RILLAARKQAVQVASLTTGMASQASETLQVPRTPRPGVESADSRRLATKHSRKALKA). A helical transmembrane segment spans residues 267 to 293 (SLTLGILLGMFFVTWLPFFVANIVQAV). Serotonin is bound at residue N288. The Extracellular portion of the chain corresponds to 294 to 299 (CDCISP). A helical membrane pass occupies residues 300-323 (GLFDVLTWLGYCNSTMNPIIYPLF). The Cytoplasmic portion of the chain corresponds to 324–440 (MRDFKRALGR…RPHPLGIPTN (117 aa)). Residues 346–392 (ASLASPSLRTSHSGPRPGLSLQQVLPLPLPPDSDSDSDAGSGGSSGL) form a disordered region. Over residues 347–358 (SLASPSLRTSHS) the composition is skewed to polar residues. Over residues 362 to 371 (PGLSLQQVLP) the composition is skewed to low complexity.

The protein belongs to the G-protein coupled receptor 1 family. In terms of assembly, interacts with MTOR, RPTOR and NF1. Interacts with CDK5.

The protein localises to the cell membrane. In terms of biological role, G-protein coupled receptor for 5-hydroxytryptamine (serotonin), a biogenic hormone that functions as a neurotransmitter, a hormone and a mitogen. Also has a high affinity for tricyclic psychotropic drugs. Ligand binding causes a conformation change that triggers signaling via guanine nucleotide-binding proteins (G proteins) and modulates the activity of downstream effectors. HTR6 is coupled to G(s) G alpha proteins and mediates activation of adenylate cyclase activity. Controls pyramidal neurons migration during corticogenesis, through the regulation of CDK5 activity. Is an activator of mTOR signaling. This is 5-hydroxytryptamine receptor 6 (HTR6) from Pan troglodytes (Chimpanzee).